The chain runs to 258 residues: Probable dihydroorotate dehydrogenase B (NAD(+)), electron transfer subunit (258 aa).

The FAD-binding FR-type domain occupies 1–90 (MRPISATIKE…RGPYGNGWEI (90 aa)). [2Fe-2S] cluster is bound by residues cysteine 210, cysteine 215, cysteine 218, and cysteine 228.

It belongs to the PyrK family. Heterotetramer of 2 PyrK and 2 PyrD type B subunits. The cofactor is [2Fe-2S] cluster. It depends on FAD as a cofactor.

Its pathway is pyrimidine metabolism; UMP biosynthesis via de novo pathway; orotate from (S)-dihydroorotate (NAD(+) route): step 1/1. Responsible for channeling the electrons from the oxidation of dihydroorotate from the FMN redox center in the PyrD type B subunit to the ultimate electron acceptor NAD(+). In Methanocella arvoryzae (strain DSM 22066 / NBRC 105507 / MRE50), this protein is Probable dihydroorotate dehydrogenase B (NAD(+)), electron transfer subunit.